A 986-amino-acid polypeptide reads, in one-letter code: Probable serine/threonine-protein kinase DDB_G0272092 (986 aa).

Residues 1–107 form the C2 domain; sequence MARKIGSVRI…EYIVDTTKWY (107 aa). Residues Asp-22, Asp-28, Asp-76, Asp-78, Ser-81, and Asp-84 each contribute to the Ca(2+) site. 6 ANK repeats span residues 137–167, 171–201, 205–238, 242–274, 278–307, and 312–344; these read PEKS…DYTI, EGTP…RVSI, HGNT…GIND, LGET…IINH, TRDT…NVMI, and PSRT…WLNE. The 64-residue stretch at 333 to 396 folds into the SAM domain; that stretch reads EKVIEISDWL…LRAVRKIKDP (64 aa). Residues 412–438 are compositionally biased toward low complexity; that stretch reads HVENDNNNNNNNNNNNNNSQEQCNINN. Disordered stretches follow at residues 412 to 520 and 532 to 574; these read HVEN…SNTT and TTLT…PEGP. The segment covering 439 to 448 has biased composition (polar residues); it reads DSLGSGNRNS. The segment covering 454–464 has biased composition (low complexity); it reads QNQNNTLNNNN. Residues 465–476 show a composition bias toward polar residues; it reads VESKSTGNLNSL. Low complexity-rich tracts occupy residues 493–520 and 546–571; these read NILS…SNTT and TEST…TVTP. The Protein kinase domain maps to 601-870; sequence LTYNVLLGTG…ELLKIRDEYN (270 aa). ATP is bound by residues 607–615 and Lys-628; that span reads LGTGASGKV. The Proton acceptor role is filled by Asp-722. 2 stretches are compositionally biased toward low complexity: residues 901–913 and 928–947; these read DSNN…NNNN and SNSN…SDNN. The tract at residues 901–986 is disordered; the sequence is DSNNINNNNN…SPMEPKSIKK (86 aa). Composition is skewed to polar residues over residues 948–959 and 969–978; these read ISEPATTDSITK and LTRTRSSSSP.

The protein belongs to the protein kinase superfamily. TKL Ser/Thr protein kinase family. Requires Ca(2+) as cofactor.

The catalysed reaction is L-seryl-[protein] + ATP = O-phospho-L-seryl-[protein] + ADP + H(+). It catalyses the reaction L-threonyl-[protein] + ATP = O-phospho-L-threonyl-[protein] + ADP + H(+). This chain is Probable serine/threonine-protein kinase DDB_G0272092, found in Dictyostelium discoideum (Social amoeba).